We begin with the raw amino-acid sequence, 135 residues long: Galectin-1 (135 aa).

Residue A2 is modified to N-acetylalanine. One can recognise a Galectin domain in the interval 4 to 135 (GLVASNLNLK…DFKIKCVAFE (132 aa)). N6-acetyllysine is present on residues K13, K19, and K29. S30 carries the post-translational modification Phosphoserine. A beta-D-galactoside is bound by residues 45–49 (HFNPR), H53, N62, and 69–72 (WGAE). At K128 the chain carries N6-acetyllysine.

As to quaternary structure, homodimer. Binds LGALS3BP. Interacts with CD2, CD3, CD4, CD6, CD7, CD43, ALCAM and CD45. Interacts with laminin (via poly-N-acetyllactosamine). Interacts with SUSD2. Interacts with cargo receptor TMED10; the interaction mediates the translocation from the cytoplasm into the ERGIC (endoplasmic reticulum-Golgi intermediate compartment) and thereby secretion.

It is found in the secreted. The protein localises to the extracellular space. The protein resides in the extracellular matrix. Its subcellular location is the cytoplasm. Lectin that binds beta-galactoside and a wide array of complex carbohydrates. Plays a role in regulating apoptosis, cell proliferation and cell differentiation. Inhibits CD45 protein phosphatase activity and therefore the dephosphorylation of Lyn kinase. Strong inducer of T-cell apoptosis. This chain is Galectin-1 (LGALS1), found in Sus scrofa (Pig).